The chain runs to 704 residues: Ion-translocating oxidoreductase complex subunit C (704 aa).

2 consecutive 4Fe-4S ferredoxin-type domains span residues Met368–Tyr397 and Lys407–Phe436. 8 residues coordinate [4Fe-4S] cluster: Cys377, Cys380, Cys383, Cys387, Cys416, Cys419, Cys422, and Cys426. The disordered stretch occupies residues Arg536 to Ala684. Residues Lys556 to Arg565 show a composition bias toward low complexity.

The protein belongs to the 4Fe4S bacterial-type ferredoxin family. RnfC subfamily. As to quaternary structure, the complex is composed of six subunits: RsxA, RsxB, RsxC, RsxD, RsxE and RsxG. [4Fe-4S] cluster serves as cofactor.

Its subcellular location is the cell inner membrane. Its function is as follows. Part of a membrane-bound complex that couples electron transfer with translocation of ions across the membrane. Required to maintain the reduced state of SoxR. The sequence is that of Ion-translocating oxidoreductase complex subunit C from Salmonella choleraesuis (strain SC-B67).